Reading from the N-terminus, the 325-residue chain is Peroxidase RIP1 (325 aa).

A signal peptide spans methionine 1–serine 21. Cystine bridges form between cysteine 38/cysteine 118, cysteine 71/cysteine 76, cysteine 125/cysteine 321, and cysteine 206/cysteine 231. Histidine 69 serves as the catalytic Proton acceptor. Positions 70, 73, 75, 77, and 79 each coordinate Ca(2+). N-linked (GlcNAc...) asparagine glycosylation occurs at asparagine 87. A substrate-binding site is contributed by proline 169. Residue asparagine 174 is glycosylated (N-linked (GlcNAc...) asparagine). Histidine 199 contacts heme b. Threonine 200 serves as a coordination point for Ca(2+). An N-linked (GlcNAc...) asparagine glycan is attached at asparagine 215. Aspartate 244, threonine 246, and glutamate 251 together coordinate Ca(2+).

The protein belongs to the peroxidase family. Classical plant (class III) peroxidase subfamily. Heme b serves as cofactor. Requires Ca(2+) as cofactor. As to expression, expressed in the differentiating root epidermis following inoculation with the bacterial symbiont Sinorhizobium meliloti.

The protein localises to the secreted. It catalyses the reaction 2 a phenolic donor + H2O2 = 2 a phenolic radical donor + 2 H2O. Functionally, removal of H(2)O(2), oxidation of toxic reductants, biosynthesis and degradation of lignin, suberization, auxin catabolism, response to environmental stresses such as wounding, pathogen attack and oxidative stress. These functions might be dependent on each isozyme/isoform in each plant tissue. The sequence is that of Peroxidase RIP1 from Medicago truncatula (Barrel medic).